We begin with the raw amino-acid sequence, 279 residues long: 30 kDa ribonucleoprotein, chloroplastic (279 aa).

Residues 87–165 (LKIFVGNLLF…RALRVNSGPP (79 aa)) enclose the RRM 1 domain. A disordered region spans residues 156–187 (RALRVNSGPPPEKRENSSFRENSSFRGGSRGG). A linker (Gly-rich) region spans residues 166 to 193 (PEKRENSSFRENSSFRGGSRGGGSFDSS). In terms of domain architecture, RRM 2 spans 194–272 (NRVYVGNLAW…RAIRVSPAEA (79 aa)).

In terms of tissue distribution, expressed at high levels in the leaves and seedlings, and lower levels are seen in the stems and roots.

Its subcellular location is the plastid. It localises to the chloroplast. In terms of biological role, could be involved in splicing and/or processing of chloroplast RNA's. In Nicotiana plumbaginifolia (Leadwort-leaved tobacco), this protein is 30 kDa ribonucleoprotein, chloroplastic.